We begin with the raw amino-acid sequence, 306 residues long: Ribosomal protein L11 methyltransferase (306 aa).

Residues T152, G179, D201, and N243 each contribute to the S-adenosyl-L-methionine site.

The protein belongs to the methyltransferase superfamily. PrmA family.

It localises to the cytoplasm. The catalysed reaction is L-lysyl-[protein] + 3 S-adenosyl-L-methionine = N(6),N(6),N(6)-trimethyl-L-lysyl-[protein] + 3 S-adenosyl-L-homocysteine + 3 H(+). In terms of biological role, methylates ribosomal protein L11. The chain is Ribosomal protein L11 methyltransferase from Citrifermentans bemidjiense (strain ATCC BAA-1014 / DSM 16622 / JCM 12645 / Bem) (Geobacter bemidjiensis).